A 567-amino-acid chain; its full sequence is Potassium-transporting ATPase potassium-binding subunit (567 aa).

The next 11 helical transmembrane spans lie at 5 to 25 (GWIQILVFCGIIGLLTKPLGF), 64 to 84 (TAYAVALLLFNLAGFLVLYAL), 136 to 156 (GLTVQNFVSAATGIAIAIALI), 179 to 199 (LYVLLPLCIVLTLVYVWLGIP), 254 to 274 (ISNLIQMVTIFALGAALTNVF), 285 to 305 (WAILASMGALFIAGVAVCYWA), 330 to 350 (FGIALSALFAVITTAASCGAV), 357 to 376 (FTALGGMIPLINMQLGEVIV), 421 to 441 (MLAILCLPLAMLIFTAIAVVL), 486 to 506 (ITIGIGMLMGRFLVIIPALAI), and 529 to 549 (LFVGLLIGVIVIVGGLTFFPA).

It belongs to the KdpA family. The system is composed of three essential subunits: KdpA, KdpB and KdpC.

It localises to the cell inner membrane. Its function is as follows. Part of the high-affinity ATP-driven potassium transport (or Kdp) system, which catalyzes the hydrolysis of ATP coupled with the electrogenic transport of potassium into the cytoplasm. This subunit binds the periplasmic potassium ions and delivers the ions to the membrane domain of KdpB through an intramembrane tunnel. The sequence is that of Potassium-transporting ATPase potassium-binding subunit from Mesorhizobium japonicum (strain LMG 29417 / CECT 9101 / MAFF 303099) (Mesorhizobium loti (strain MAFF 303099)).